The chain runs to 512 residues: ATP synthase subunit alpha (512 aa).

169–176 (GDRQTGKT) contacts ATP.

The protein belongs to the ATPase alpha/beta chains family. F-type ATPases have 2 components, CF(1) - the catalytic core - and CF(0) - the membrane proton channel. CF(1) has five subunits: alpha(3), beta(3), gamma(1), delta(1), epsilon(1). CF(0) has three main subunits: a(1), b(2) and c(9-12). The alpha and beta chains form an alternating ring which encloses part of the gamma chain. CF(1) is attached to CF(0) by a central stalk formed by the gamma and epsilon chains, while a peripheral stalk is formed by the delta and b chains.

It is found in the cell inner membrane. The enzyme catalyses ATP + H2O + 4 H(+)(in) = ADP + phosphate + 5 H(+)(out). Functionally, produces ATP from ADP in the presence of a proton gradient across the membrane. The alpha chain is a regulatory subunit. The polypeptide is ATP synthase subunit alpha (Azoarcus sp. (strain BH72)).